The sequence spans 197 residues: MPKVGMQPIRRSQLIHATLEAVDQVGMGDASIALIARLAGVSNGIISHYFQDKNGLLEATMRHLLSALSKAVRERRAALYDDSPRAHLRAIVEGNFDDSQVNGPAMKTWLAFWATSMHQPALRRLQRVNDHRLYSNLCYQFRRQLSADDARAAARGLAALIDGLWLRGALTGDAFDTDEALNIAYDYLDQQLAKQSG.

One can recognise an HTH tetR-type domain in the interval 8–68 (PIRRSQLIHA…ATMRHLLSAL (61 aa)). A DNA-binding region (H-T-H motif) is located at residues 31 to 50 (SIALIARLAGVSNGIISHYF).

The protein operates within amine and polyamine biosynthesis; betaine biosynthesis via choline pathway [regulation]. Its function is as follows. Repressor involved in the biosynthesis of the osmoprotectant glycine betaine. It represses transcription of the choline transporter BetT and the genes of BetAB involved in the synthesis of glycine betaine. The chain is HTH-type transcriptional regulator BetI from Pseudomonas aeruginosa (strain LESB58).